The primary structure comprises 737 residues: MGETTAFVLLLVATLTRSSEIPADDTVGLLTEPQVAMFCGKLNMHINVQNGKWESDPSGTKSCLNTKEGILQYCQEVYPELQITNVVEANQPVSIQNWCKKGRKQCRSHTHIVVPYRCLVGEFVSDALLVPDKCKFLHQERMNQCESHLHWHTVAKESCGDRSMNLHDYGMLLPCGIDRFRGVKFVCCPAETEQETDSSEVEGEESDVWWGGADPEYSENSPPTPSRATYVAGDAFERDENGDGDEDEEDDEDVDPTDEQESDERTANVAMTTTTTTTTESVEEVVRAVCWAQAESGPCRAMLERWYFNPKKRRCVPFLFGGCGGNRNNFESEEYCLAVCSSSLPTVAPSPPDAVDQYFEAPGDDNEHADFRKAKESLEAKHRERMSQVMREWEEAERQAKNLPRADKKAVIQHFQEKVEALEQEAAGERQQLVETHMARVEALLNSRRRLTLENYLGALQANPPRARQVLSLLKKYVRAEQKDRQHTLKHYEHVRTVDPKKAAQIRPQVLTHLRVIDERMNQSLALLYKVPSVASEIQNQIYPAAGSDCKDPVEHCVCPQVDGLVSYGNDALMPDQAYSSAPMDMGVDGLGSIDQSFNQANTENHVEPVDARPIPDRGLPTRPVSSLKLEEMPEVRTETDKRQSAGYEVYHQKLVFFADDVGSNKGAIIGLMVGGVVIATVIVITLVMLRKKQYTSIHHGVIEVDAAVTPEERHLARMQQNGYENPTYKFFEQMQN.

Positions 1–18 (MGETTAFVLLLVATLTRS) are cleaved as a signal peptide. Residues 19–668 (SEIPADDTVG…ADDVGSNKGA (650 aa)) lie on the Extracellular side of the membrane. A GFLD subdomain region spans residues 29–124 (LLTEPQVAMF…PYRCLVGEFV (96 aa)). The 162-residue stretch at 29–190 (LLTEPQVAMF…RGVKFVCCPA (162 aa)) folds into the E1 domain. Disulfide bonds link Cys-39/Cys-63, Cys-74/Cys-118, Cys-99/Cys-106, Cys-134/Cys-188, Cys-145/Cys-175, and Cys-159/Cys-187. The tract at residues 132–190 (DKCKFLHQERMNQCESHLHWHTVAKESCGDRSMNLHDYGMLLPCGIDRFRGVKFVCCPA) is cuBD subdomain. Residues His-148, His-152, and Tyr-169 each contribute to the Cu cation site. Composition is skewed to acidic residues over residues 193–207 (EQET…EESD) and 242–262 (GDGD…EQES). A disordered region spans residues 193–280 (EQETDSSEVE…MTTTTTTTTE (88 aa)). Residues 286–344 (VRAVCWAQAESGPCRAMLERWYFNPKKRRCVPFLFGGCGGNRNNFESEEYCLAVCSSSL) enclose the BPTI/Kunitz inhibitor domain. Intrachain disulfides connect Cys-290-Cys-340, Cys-299-Cys-323, and Cys-315-Cys-336. The E2 domain maps to 354–545 (AVDQYFEAPG…SEIQNQIYPA (192 aa)). N-linked (GlcNAc...) asparagine glycosylation is present at Asn-522. A helical transmembrane segment spans residues 669-689 (IIGLMVGGVVIATVIVITLVM). Residues 690–737 (LRKKQYTSIHHGVIEVDAAVTPEERHLARMQQNGYENPTYKFFEQMQN) are Cytoplasmic-facing. A YENPXY motif motif is present at residues 724-729 (YENPTY). The segment at 726–729 (NPTY) is clathrin-binding.

The protein belongs to the APP family.

Its subcellular location is the membrane. Its function is as follows. Functional neuronal receptor which couples to intracellular signaling pathway through the GTP-binding protein G(O). This chain is Amyloid-beta A4 protein (app), found in Takifugu rubripes (Japanese pufferfish).